The primary structure comprises 201 residues: Charged multivesicular body protein 6 (201 aa).

Gly2 carries the N-myristoyl glycine lipid modification. Positions 10 to 145 (QSRVTEQDKA…YQRQIDELLA (136 aa)) form a coiled coil. Phosphoserine is present on Ser119. At Thr130 the chain carries Phosphothreonine. Positions 168–179 (IELPEVPSEPLP) match the Type-2 MIT-interacting motif motif. The tract at residues 170 to 181 (LPEVPSEPLPEK) is interaction with VPS4A.

Belongs to the SNF7 family. In terms of assembly, probable core component of the endosomal sorting required for transport complex III (ESCRT-III). ESCRT-III components are thought to multimerize to form a flat lattice on the perimeter membrane of the endosome. Several assembly forms of ESCRT-III may exist that interact and act sequentially. Interacts with VPS4A; the interaction is direct. Interacts with VPS4B; the interaction is direct. Interacts with CHMP4A, CHMP4B and CHMP4C. Interacts with SNF8, VPS25 and VPS36. Post-translationally, ISGylated in a CHMP5-dependent manner. Isgylation weakens its interaction with VPS4A. In terms of tissue distribution, ubiquitously expressed.

Its subcellular location is the endomembrane system. It is found in the endosome membrane. It localises to the late endosome membrane. The protein resides in the membrane. Its function is as follows. Probable core component of the endosomal sorting required for transport complex III (ESCRT-III) which is involved in multivesicular bodies (MVBs) formation and sorting of endosomal cargo proteins into MVBs. MVBs contain intraluminal vesicles (ILVs) that are generated by invagination and scission from the limiting membrane of the endosome and mostly are delivered to lysosomes enabling degradation of membrane proteins, such as stimulated growth factor receptors, lysosomal enzymes and lipids. The MVB pathway appears to require the sequential function of ESCRT-O, -I,-II and -III complexes. ESCRT-III proteins mostly dissociate from the invaginating membrane before the ILV is released. The ESCRT machinery also functions in topologically equivalent membrane fission events, such as the terminal stages of cytokinesis and the budding of enveloped viruses (HIV-1 and other lentiviruses). ESCRT-III proteins are believed to mediate the necessary vesicle extrusion and/or membrane fission activities, possibly in conjunction with the AAA ATPase VPS4. In the ESCRT-III complex, it probably serves as an acceptor for the ESCRT-II complex on endosomal membranes. The protein is Charged multivesicular body protein 6 (CHMP6) of Homo sapiens (Human).